Consider the following 636-residue polypeptide: MDRPHTPILDQVNYPSDLRRMSNADLAQCADELRAEVISAVSETGGHLGSSLGVVELSVAIHAVFNTPYDKLVWDVGHQCYPHKVLTGRRDRIRTLRQKDGLSGFTKRSESEYDPFGAAHSSTSISAALGFAAAQDLGEATGDGIAVIGDGSISAGMAYEALNNAGDLGKRLFVILNDNEMSIAPPVGAMSKYLTDLSAKSPLATLKDIADGVASHLPEPIRQGAERARELVTGHQPSATLFEHLGFTYIGPVDGHDMEELLTTLRAAKARATGPVLIHAVTVKGKGYSPAELSDDCYHGVAKFDVATGQQKKSAPNAPSYTSVFGQTLLNMAEADSRIVGVTAAMPGGTGISTLQKAKPNRVFDVGIAEQHAVTFSAGMAAGGLKPFCAIYSSFLQRGYDQIVHDVALQSLPVRFMIDRAGLVGADGPTHAGAFDIGYLSALPNMTVMACADEAELVHMMATAAAHNDGPIALRYPRGEGTGVALPDQGDVLEIGKGRVIQDGHDVAILSFGAHLEEAKDAATALEARGLSVTVADARFAKPLDTTLIDDLMTKHSALITVEQGAVLGFGGLVLHHLAATGQLDGRCAVRTLHLPDRFIDQASPAEMYADAGLTADDIAQAALEAMGVEVLAARA.

Residues H78 and 119 to 121 (AHS) contribute to the thiamine diphosphate site. A Mg(2+)-binding site is contributed by D150. Thiamine diphosphate contacts are provided by residues 151–152 (GS), N179, Y288, and E370. Mg(2+) is bound at residue N179.

The protein belongs to the transketolase family. DXPS subfamily. In terms of assembly, homodimer. Mg(2+) is required as a cofactor. Thiamine diphosphate serves as cofactor.

The catalysed reaction is D-glyceraldehyde 3-phosphate + pyruvate + H(+) = 1-deoxy-D-xylulose 5-phosphate + CO2. Its pathway is metabolic intermediate biosynthesis; 1-deoxy-D-xylulose 5-phosphate biosynthesis; 1-deoxy-D-xylulose 5-phosphate from D-glyceraldehyde 3-phosphate and pyruvate: step 1/1. Functionally, catalyzes the acyloin condensation reaction between C atoms 2 and 3 of pyruvate and glyceraldehyde 3-phosphate to yield 1-deoxy-D-xylulose-5-phosphate (DXP). The chain is 1-deoxy-D-xylulose-5-phosphate synthase 2 from Jannaschia sp. (strain CCS1).